The primary structure comprises 866 residues: Translation initiation factor IF-2 (866 aa).

Disordered stretches follow at residues 1 to 63 (MTND…AAVQ) and 92 to 257 (VVRA…RGRS). Residues 26-36 (ETGQVRQSFSH) show a composition bias toward polar residues. Basic and acidic residues predominate over residues 92–135 (VVRAAEEAERKRLEEIERRRREEEEARLKVEEEARRKAEEEAAR). 2 stretches are compositionally biased toward low complexity: residues 152–164 (VAPA…AAPQ) and 179–197 (PDAS…TEAP). Residues 365–533 (SRPPVVTVMG…AILLQSEILD (169 aa)) form the tr-type G domain. A G1 region spans residues 374 to 381 (GHVDHGKT). Residue 374-381 (GHVDHGKT) participates in GTP binding. The G2 stretch occupies residues 399 to 403 (GITQH). A G3 region spans residues 421 to 424 (DTPG). Residues 421 to 425 (DTPGH) and 475 to 478 (NKMD) contribute to the GTP site. A G4 region spans residues 475–478 (NKMD). Residues 511 to 513 (SAK) form a G5 region.

This sequence belongs to the TRAFAC class translation factor GTPase superfamily. Classic translation factor GTPase family. IF-2 subfamily.

The protein localises to the cytoplasm. One of the essential components for the initiation of protein synthesis. Protects formylmethionyl-tRNA from spontaneous hydrolysis and promotes its binding to the 30S ribosomal subunits. Also involved in the hydrolysis of GTP during the formation of the 70S ribosomal complex. This is Translation initiation factor IF-2 from Rhodospirillum rubrum (strain ATCC 11170 / ATH 1.1.1 / DSM 467 / LMG 4362 / NCIMB 8255 / S1).